Consider the following 216-residue polypeptide: Thiopurine S-methyltransferase (216 aa).

S-adenosyl-L-methionine contacts are provided by tryptophan 10, leucine 45, glutamate 66, and arginine 123.

Belongs to the class I-like SAM-binding methyltransferase superfamily. TPMT family.

It localises to the cytoplasm. It carries out the reaction S-adenosyl-L-methionine + a thiopurine = S-adenosyl-L-homocysteine + a thiopurine S-methylether.. This is Thiopurine S-methyltransferase from Pseudomonas entomophila (strain L48).